A 470-amino-acid polypeptide reads, in one-letter code: tRNA(Ile)-lysidine synthase (470 aa).

32–37 (SGGVDS) contributes to the ATP binding site.

This sequence belongs to the tRNA(Ile)-lysidine synthase family.

It localises to the cytoplasm. It carries out the reaction cytidine(34) in tRNA(Ile2) + L-lysine + ATP = lysidine(34) in tRNA(Ile2) + AMP + diphosphate + H(+). Functionally, ligates lysine onto the cytidine present at position 34 of the AUA codon-specific tRNA(Ile) that contains the anticodon CAU, in an ATP-dependent manner. Cytidine is converted to lysidine, thus changing the amino acid specificity of the tRNA from methionine to isoleucine. In Shewanella woodyi (strain ATCC 51908 / MS32), this protein is tRNA(Ile)-lysidine synthase.